The primary structure comprises 226 residues: Ras-related protein RABA4a (226 aa).

Thr-2 is modified (N-acetylthreonine). Residue 24–31 (GDSAVGKS) coordinates GTP. The short motif at 46-54 (SKATIGVEF) is the Effector region element. Residues 72–76 (DTAGQ), 130–133 (NKSD), and 160–161 (SA) contribute to the GTP site. The disordered stretch occupies residues 189–226 (ASEDQENGNPGSLAGKKIDIVPGPGQVIPNKSNMCCNS). Over residues 217–226 (PNKSNMCCNS) the composition is skewed to polar residues. 2 S-geranylgeranyl cysteine lipidation sites follow: Cys-223 and Cys-224.

It belongs to the small GTPase superfamily. Rab family. Interacts with TCTP1.

It is found in the cell membrane. Intracellular vesicle trafficking and protein transport. This chain is Ras-related protein RABA4a, found in Arabidopsis thaliana (Mouse-ear cress).